The primary structure comprises 158 residues: 2-C-methyl-D-erythritol 2,4-cyclodiphosphate synthase (158 aa).

Aspartate 9 and histidine 11 together coordinate a divalent metal cation. 4-CDP-2-C-methyl-D-erythritol 2-phosphate contacts are provided by residues 9–11 (DVH) and 35–36 (HS). A divalent metal cation is bound at residue histidine 43. Residues 57 to 59 (DIG), 62 to 66 (FPDTD), 101 to 107 (AQAPKMA), 133 to 136 (TTTE), phenylalanine 140, and arginine 143 contribute to the 4-CDP-2-C-methyl-D-erythritol 2-phosphate site.

It belongs to the IspF family. Homotrimer. A divalent metal cation serves as cofactor.

It catalyses the reaction 4-CDP-2-C-methyl-D-erythritol 2-phosphate = 2-C-methyl-D-erythritol 2,4-cyclic diphosphate + CMP. Its pathway is isoprenoid biosynthesis; isopentenyl diphosphate biosynthesis via DXP pathway; isopentenyl diphosphate from 1-deoxy-D-xylulose 5-phosphate: step 4/6. Involved in the biosynthesis of isopentenyl diphosphate (IPP) and dimethylallyl diphosphate (DMAPP), two major building blocks of isoprenoid compounds. Catalyzes the conversion of 4-diphosphocytidyl-2-C-methyl-D-erythritol 2-phosphate (CDP-ME2P) to 2-C-methyl-D-erythritol 2,4-cyclodiphosphate (ME-CPP) with a corresponding release of cytidine 5-monophosphate (CMP). In Vibrio campbellii (strain ATCC BAA-1116), this protein is 2-C-methyl-D-erythritol 2,4-cyclodiphosphate synthase.